Here is a 414-residue protein sequence, read N- to C-terminus: 2,3-diketo-5-methylthiopentyl-1-phosphate enolase (414 aa).

Catalysis depends on lysine 99, which acts as the Proton acceptor. Residues lysine 148, 174-177 (KDDE), histidine 265, glycine 338, and 360-361 (GG) each bind substrate. Mg(2+) is bound by residues lysine 174, aspartate 176, and glutamate 177. Residue lysine 174 is modified to N6-carboxylysine.

The protein belongs to the RuBisCO large chain family. Type IV subfamily. In terms of assembly, homodimer. Mg(2+) serves as cofactor.

The enzyme catalyses 5-methylsulfanyl-2,3-dioxopentyl phosphate = 2-hydroxy-5-methylsulfanyl-3-oxopent-1-enyl phosphate. It functions in the pathway amino-acid biosynthesis; L-methionine biosynthesis via salvage pathway; L-methionine from S-methyl-5-thio-alpha-D-ribose 1-phosphate: step 3/6. Functionally, catalyzes the enolization of 2,3-diketo-5-methylthiopentyl-1-phosphate (DK-MTP-1-P) into 2-hydroxy-3-keto-5-methylthiopentenyl-1-phosphate (HK-MTPenyl-1-P). In Bacillus cereus (strain AH187), this protein is 2,3-diketo-5-methylthiopentyl-1-phosphate enolase.